A 479-amino-acid polypeptide reads, in one-letter code: Glutamyl-tRNA(Gln) amidotransferase subunit A (479 aa).

Catalysis depends on charge relay system residues K71 and S146. S170 (acyl-ester intermediate) is an active-site residue.

It belongs to the amidase family. GatA subfamily. As to quaternary structure, heterotrimer of A, B and C subunits.

It catalyses the reaction L-glutamyl-tRNA(Gln) + L-glutamine + ATP + H2O = L-glutaminyl-tRNA(Gln) + L-glutamate + ADP + phosphate + H(+). In terms of biological role, allows the formation of correctly charged Gln-tRNA(Gln) through the transamidation of misacylated Glu-tRNA(Gln) in organisms which lack glutaminyl-tRNA synthetase. The reaction takes place in the presence of glutamine and ATP through an activated gamma-phospho-Glu-tRNA(Gln). The chain is Glutamyl-tRNA(Gln) amidotransferase subunit A from Lactobacillus acidophilus (strain ATCC 700396 / NCK56 / N2 / NCFM).